The primary structure comprises 257 residues: Glutamate racemase (257 aa).

Residues 12 to 13 (DS) and 44 to 45 (YG) contribute to the substrate site. Cysteine 75 serves as the catalytic Proton donor/acceptor. A substrate-binding site is contributed by 76–77 (NT). Cysteine 186 acts as the Proton donor/acceptor in catalysis. 187-188 (TH) contacts substrate.

This sequence belongs to the aspartate/glutamate racemases family.

It carries out the reaction L-glutamate = D-glutamate. It functions in the pathway cell wall biogenesis; peptidoglycan biosynthesis. In terms of biological role, provides the (R)-glutamate required for cell wall biosynthesis. This Clostridium kluyveri (strain NBRC 12016) protein is Glutamate racemase.